We begin with the raw amino-acid sequence, 24 residues long: Humanin-like 1 (24 aa).

Belongs to the humanin family. In terms of tissue distribution, highly expressed in the kidney, heart muscle and testis.

Its subcellular location is the secreted. It is found in the cytoplasm. In terms of biological role, plays a role as a neuroprotective and antiapoptotic factor. In Homo sapiens (Human), this protein is Humanin-like 1.